The sequence spans 269 residues: Putative pyruvate, phosphate dikinase regulatory protein (269 aa).

An ADP-binding site is contributed by 151–158; the sequence is GVSRSSKT.

Belongs to the pyruvate, phosphate/water dikinase regulatory protein family. PDRP subfamily.

It catalyses the reaction N(tele)-phospho-L-histidyl/L-threonyl-[pyruvate, phosphate dikinase] + ADP = N(tele)-phospho-L-histidyl/O-phospho-L-threonyl-[pyruvate, phosphate dikinase] + AMP + H(+). It carries out the reaction N(tele)-phospho-L-histidyl/O-phospho-L-threonyl-[pyruvate, phosphate dikinase] + phosphate + H(+) = N(tele)-phospho-L-histidyl/L-threonyl-[pyruvate, phosphate dikinase] + diphosphate. Functionally, bifunctional serine/threonine kinase and phosphorylase involved in the regulation of the pyruvate, phosphate dikinase (PPDK) by catalyzing its phosphorylation/dephosphorylation. This chain is Putative pyruvate, phosphate dikinase regulatory protein, found in Geobacter metallireducens (strain ATCC 53774 / DSM 7210 / GS-15).